We begin with the raw amino-acid sequence, 264 residues long: Cancer/testis antigen 55 (264 aa).

A disordered region spans residues 242–264; it reads SSSGFQDDGGLGRPKRERRSQSI. Residues 254-264 are compositionally biased toward basic residues; sequence RPKRERRSQSI.

In terms of assembly, interacts with GABARAP; this interaction may be important for GABARAP protein stability. Isoform 1 interacts with LAMP2; this interaction may be important for LAMP2 protein stability. Testis-specific. Expressed in spermatozoa (at protein level).

It is found in the cytoplasm. It localises to the cytoplasmic vesicle. Its subcellular location is the secretory vesicle. The protein localises to the acrosome. The protein resides in the cell projection. It is found in the cilium. It localises to the flagellum. In terms of biological role, plays a role in spermatogenesis, possibly acting in the regulation of the autophagy pathway. This chain is Cancer/testis antigen 55 (CT55), found in Homo sapiens (Human).